The following is a 1407-amino-acid chain: DNA-directed RNA polymerase subunit beta' (1407 aa).

4 residues coordinate Zn(2+): Cys-70, Cys-72, Cys-85, and Cys-88. Residues Asp-460, Asp-462, and Asp-464 each contribute to the Mg(2+) site. Residues Cys-814, Cys-888, Cys-895, and Cys-898 each coordinate Zn(2+).

The protein belongs to the RNA polymerase beta' chain family. The RNAP catalytic core consists of 2 alpha, 1 beta, 1 beta' and 1 omega subunit. When a sigma factor is associated with the core the holoenzyme is formed, which can initiate transcription. Mg(2+) is required as a cofactor. Zn(2+) serves as cofactor.

The catalysed reaction is RNA(n) + a ribonucleoside 5'-triphosphate = RNA(n+1) + diphosphate. DNA-dependent RNA polymerase catalyzes the transcription of DNA into RNA using the four ribonucleoside triphosphates as substrates. This Salmonella arizonae (strain ATCC BAA-731 / CDC346-86 / RSK2980) protein is DNA-directed RNA polymerase subunit beta'.